Reading from the N-terminus, the 201-residue chain is Peptidyl-prolyl cis-trans isomerase FKBP11 (201 aa).

The signal sequence occupies residues 1–27 (MTLRPSLLPLHLLLLLLLSAAVCRAEA). The PPIase FKBP-type domain occupies 57 to 144 (GDTLHIHYTG…QYDVELIALI (88 aa)). Residues 156–176 (ILPLVGMAMVPALLGLIGYHL) form a helical membrane-spanning segment.

It belongs to the FKBP-type PPIase family. In terms of assembly, interacts with IFITM5.

The protein localises to the membrane. It catalyses the reaction [protein]-peptidylproline (omega=180) = [protein]-peptidylproline (omega=0). In terms of biological role, PPIases accelerate the folding of proteins during protein synthesis. This chain is Peptidyl-prolyl cis-trans isomerase FKBP11 (FKBP11), found in Homo sapiens (Human).